We begin with the raw amino-acid sequence, 911 residues long: DNA replication licensing factor mcm4 (911 aa).

Positions 1-132 are disordered; sequence MSSSQQSGRA…RPGVSTPSSL (132 aa). A phosphoserine mark is found at S37, S38, and S41. Positions 42-56 are enriched in low complexity; the sequence is TRLTTPRTTARTPLA. Positions 63-84 are enriched in polar residues; that stretch reads ESSSPGPNIPQSSRSHLLSQRN. S92 carries the post-translational modification Phosphoserine. Positions 493 to 702 constitute an MCM domain; sequence IYDILSRSLA…LDRKLANHIV (210 aa). 545 to 552 serves as a coordination point for ATP; the sequence is GDPSTSKS. The Arginine finger signature appears at 677-680; it reads SRFD.

This sequence belongs to the MCM family. As to quaternary structure, component of the mcm2-7 complex. The complex forms a toroidal hexameric ring with the proposed subunit order mcm2-mcm6-mcm4-mcm7-mcm3-mcm5. The heterodimers of mcm4/mcm6 and mcm3/mcm5 interact with mcm2 and mcm7.

The protein localises to the nucleus. It catalyses the reaction ATP + H2O = ADP + phosphate + H(+). Acts as a component of the mcm2-7 complex (mcm complex) which is the putative replicative helicase essential for 'once per cell cycle' DNA replication initiation and elongation in eukaryotic cells. The active ATPase sites in the mcm2-7 ring are formed through the interaction surfaces of two neighboring subunits such that a critical structure of a conserved arginine finger motif is provided in trans relative to the ATP-binding site of the Walker A box of the adjacent subunit. The six ATPase active sites, however, are likely to contribute differentially to the complex helicase activity. Required for S phase execution. This Schizosaccharomyces pombe (strain 972 / ATCC 24843) (Fission yeast) protein is DNA replication licensing factor mcm4 (mcm4).